The sequence spans 134 residues: MGSDTIADIITSIRNADMYRKSVVRVASTNISQSIVKILLREGFIENVRKHRENNKSFLVLTLRHRRNRKRTYRNLLNLKRISRPGLRIYSNYQRIPRILGGMGIVILSTSQGIMTDREARLERIGGEILCYIW.

This sequence belongs to the universal ribosomal protein uS8 family. As to quaternary structure, part of the 30S ribosomal subunit.

It is found in the plastid. Its subcellular location is the chloroplast. In terms of biological role, one of the primary rRNA binding proteins, it binds directly to 16S rRNA central domain where it helps coordinate assembly of the platform of the 30S subunit. This is Small ribosomal subunit protein uS8c (rps8) from Lactuca sativa (Garden lettuce).